Reading from the N-terminus, the 279-residue chain is Undecaprenyl-diphosphatase (279 aa).

8 helical membrane-spanning segments follow: residues 1–21 (MVLE…LPIS), 39–59 (GRFF…LYFF), 96–116 (LLLV…VRFV), 128–148 (FTMG…DALF), 155–175 (IFQI…FAII), 201–221 (FSFL…LVAG), 231–251 (YSLI…SALL), and 259–279 (FVLF…VSFF).

It belongs to the UppP family.

It localises to the cell membrane. The enzyme catalyses di-trans,octa-cis-undecaprenyl diphosphate + H2O = di-trans,octa-cis-undecaprenyl phosphate + phosphate + H(+). Catalyzes the dephosphorylation of undecaprenyl diphosphate (UPP). Confers resistance to bacitracin. This Tropheryma whipplei (strain TW08/27) (Whipple's bacillus) protein is Undecaprenyl-diphosphatase.